A 258-amino-acid polypeptide reads, in one-letter code: Small ribosomal subunit protein uS2 (258 aa).

This sequence belongs to the universal ribosomal protein uS2 family.

The sequence is that of Small ribosomal subunit protein uS2 from Leuconostoc citreum (strain KM20).